Here is a 644-residue protein sequence, read N- to C-terminus: Exoribonuclease 2 (644 aa).

The region spanning 189-516 is the RNB domain; the sequence is REDLTALNFV…NHRLLKAIIA (328 aa). In terms of domain architecture, S1 motif spans 561–643; the sequence is DERFNAEIID…ETRSVIARPA (83 aa).

It belongs to the RNR ribonuclease family. RNase II subfamily.

It is found in the cytoplasm. It catalyses the reaction Exonucleolytic cleavage in the 3'- to 5'-direction to yield nucleoside 5'-phosphates.. Its function is as follows. Involved in mRNA degradation. Hydrolyzes single-stranded polyribonucleotides processively in the 3' to 5' direction. This is Exoribonuclease 2 from Serratia proteamaculans (strain 568).